The chain runs to 592 residues: Calnexin (592 aa).

The first 20 residues, 1–20 (MEGKWLLCMLLVLGTAIVEA), serve as a signal peptide directing secretion. The Lumenal portion of the chain corresponds to 21–481 (HDGHDDDVID…QMIEAAEERP (461 aa)). S74 and D117 together coordinate Ca(2+). An N6-acetyllysine modification is found at K137. A disulfide bridge links C160 with C194. The an alpha-D-glucoside site is built by Y164, K166, Y185, and D192. The disordered stretch occupies residues 260–345 (GNLLNDMTPP…AEKPEDWDED (86 aa)). The span at 274-319 (REIEDPEDRKPEDWDERPKIPDPEAVKPDDWDEDAPAKIPDEEATK) shows a compositional bias: basic and acidic residues. Residues 276–409 (IEDPEDRKPE…RKIPNPDFFE (134 aa)) are p domain (Extended arm). 5 consecutive repeat copies span residues 278-290 (DPED…WDER), 295-307 (DPEA…WDED), 314-326 (DEEA…WLDD), 333-345 (DPDA…WDED), and 348-358 (GEWEAPQIANP). 4 X approximate repeats regions lie at residues 278 to 345 (DPED…WDED) and 348 to 405 (GEWE…IPNP). Residues 323–345 (WLDDEPEYVPDPDAEKPEDWDED) are compositionally biased toward acidic residues. An interaction with PPIB region spans residues 326-359 (DEPEYVPDPDAEKPEDWDEDMDGEWEAPQIANPK). An intrachain disulfide couples C360 to C366. A run of 3 repeats spans residues 367–377 (GVWQRPMIDNP), 381–391 (GKWKPPMIDNP), and 395–405 (GIWKPRKIPNP). E425 serves as a coordination point for an alpha-D-glucoside. Residue D436 coordinates Ca(2+). Residues 482–502 (WLWVVYILTVALPVFLVILFC) traverse the membrane as a helical segment. S-palmitoyl cysteine attachment occurs at residues C502 and C503. Topologically, residues 503–592 (CSGKKQTSAM…SPRNRKPRRE (90 aa)) are cytoplasmic. The segment at 503–592 (CSGKKQTSAM…SPRNRKPRRE (90 aa)) is sufficient to mediate interaction with SGIP1. The tract at residues 511 to 592 (AMEYKKTDAP…SPRNRKPRRE (82 aa)) is disordered. A compositionally biased stretch (acidic residues) spans 525 to 547 (KEEEEEKEEEKDKGDEEEEGEEK). S554 is subject to Phosphoserine. T562 is modified (phosphothreonine). Residue S564 is modified to Phosphoserine; by MAPK3. S583 carries the phosphoserine modification.

The protein belongs to the calreticulin family. Interacts with MAPK3/ERK1. Interacts with KCNH2. Associates with ribosomes. Interacts with SGIP1; involved in negative regulation of endocytosis. The palmitoylated form interacts with the ribosome-translocon complex component SSR1, promoting efficient folding of glycoproteins. Interacts with SERPINA2P/SERPINA2 and with the S and Z variants of SERPINA1. Interacts with PPIB. Interacts with ZNRF4. Interacts with SMIM22. Interacts with TMX2. Interacts with TMEM35A/NACHO and CHRNA7. Interacts with reticulophagy regulators RETREG2 and RETREG3. Interacts with DNM1L; may form part of a larger protein complex at the ER-mitochondrial interface during mitochondrial fission. Interacts with ADAM7. Post-translationally, phosphorylated at Ser-564 by MAPK3/ERK1. Phosphorylation by MAPK3/ERK1 increases its association with ribosomes. In terms of processing, palmitoylation by DHHC6 leads to the preferential localization to the perinuclear rough ER. It mediates the association of calnexin with the ribosome-translocon complex (RTC) which is required for efficient folding of glycosylated proteins. Ubiquitinated, leading to proteasomal degradation. Probably ubiquitinated by ZNRF4.

The protein localises to the endoplasmic reticulum membrane. It localises to the mitochondrion membrane. The protein resides in the melanosome membrane. Functionally, calcium-binding protein that interacts with newly synthesized monoglucosylated glycoproteins in the endoplasmic reticulum. It may act in assisting protein assembly and/or in the retention within the ER of unassembled protein subunits. It seems to play a major role in the quality control apparatus of the ER by the retention of incorrectly folded proteins. Associated with partial T-cell antigen receptor complexes that escape the ER of immature thymocytes, it may function as a signaling complex regulating thymocyte maturation. Additionally it may play a role in receptor-mediated endocytosis at the synapse. The protein is Calnexin (CANX) of Pongo abelii (Sumatran orangutan).